The primary structure comprises 771 residues: Hyperosmolality-gated Ca2+ permeable channel 1.3 (771 aa).

Residues 7–27 (IGVAAAINILTAIIFLLAFAI) traverse the membrane as a helical segment. Phosphoserine is present on S54. Helical transmembrane passes span 101 to 121 (IYLIGLKIFVPIALLAWSILV), 158 to 178 (FWTHLVMAYAFTFWTCYVLMK), 375 to 395 (LIMHIAFFFLTFFFMIPIAFV), 427 to 447 (FLPGIVLKLFLIFLPSILMVM), 467 to 487 (YYIFNLINVFLGSVITGSAFE), 512 to 532 (ATFFITYIMVDGWAGIAGEIL), 584 to 604 (PVTPVLLPFIIIFFALAYLVF), 630 to 650 (IISALIIAQILLMGLLSTKGA), and 651 to 671 (AQSTPFLLFLPIITFFFHRYC). The interval 744–771 (VPTKRQSRINTPAVSHASRGSSRSPPSK) is disordered. Residues 751-771 (RINTPAVSHASRGSSRSPPSK) show a composition bias toward polar residues.

Belongs to the CSC1 (TC 1.A.17) family. In terms of processing, phosphorylated at Ser-54 by BIK1 in response to pathogen-associated molecular pattern (PAMP) perception, promoting its activation. In terms of tissue distribution, preferentially expressed in guard cells.

The protein localises to the cell membrane. The enzyme catalyses Ca(2+)(in) = Ca(2+)(out). With respect to regulation, activated following phosphorylation at Ser-54 by BIK1. Its function is as follows. Calcium-permeable channel that plays a key role in plant stomatal immunity. In response to pathogen-associated molecular pattern (PAMP) perception, phosphorylated and activated by BIK1, triggering rapid influx of calcium ions across the plasma membrane, leading to stomatal closure. This is Hyperosmolality-gated Ca2+ permeable channel 1.3 from Arabidopsis thaliana (Mouse-ear cress).